We begin with the raw amino-acid sequence, 242 residues long: ATP-dependent dethiobiotin synthetase BioD (242 aa).

ATP is bound at residue 15–20 (DVGKTV). Position 19 (Thr19) interacts with Mg(2+). The active site involves Lys40. Ser44 provides a ligand contact to substrate. Mg(2+) is bound at residue Glu117. Residues 117 to 120 (EGAG), 178 to 179 (NQ), and 208 to 210 (PYS) each bind ATP.

The protein belongs to the dethiobiotin synthetase family. In terms of assembly, homodimer. The cofactor is Mg(2+).

It localises to the cytoplasm. It carries out the reaction (7R,8S)-7,8-diammoniononanoate + CO2 + ATP = (4R,5S)-dethiobiotin + ADP + phosphate + 3 H(+). Its pathway is cofactor biosynthesis; biotin biosynthesis; biotin from 7,8-diaminononanoate: step 1/2. Catalyzes a mechanistically unusual reaction, the ATP-dependent insertion of CO2 between the N7 and N8 nitrogen atoms of 7,8-diaminopelargonic acid (DAPA, also called 7,8-diammoniononanoate) to form a ureido ring. The sequence is that of ATP-dependent dethiobiotin synthetase BioD from Halalkalibacterium halodurans (strain ATCC BAA-125 / DSM 18197 / FERM 7344 / JCM 9153 / C-125) (Bacillus halodurans).